Here is a 56-residue protein sequence, read N- to C-terminus: Large ribosomal subunit protein bL32 (56 aa).

Over residues 1–20 (MAVPKRRTSRSNTRSRRSQW) the composition is skewed to basic residues. The tract at residues 1–24 (MAVPKRRTSRSNTRSRRSQWKAKV) is disordered.

The protein belongs to the bacterial ribosomal protein bL32 family.

This chain is Large ribosomal subunit protein bL32, found in Frankia casuarinae (strain DSM 45818 / CECT 9043 / HFP020203 / CcI3).